The primary structure comprises 149 residues: Transcriptional repressor NrdR (149 aa).

A zinc finger lies at 3–34 (CPFCSEQETKVIDSRLVAEGQQVRRRRECMVC). The 91-residue stretch at 49 to 139 (PRVIKRDGSR…VYRSFEDIRE (91 aa)) folds into the ATP-cone domain.

The protein belongs to the NrdR family. The cofactor is Zn(2+).

In terms of biological role, negatively regulates transcription of bacterial ribonucleotide reductase nrd genes and operons by binding to NrdR-boxes. This chain is Transcriptional repressor NrdR, found in Alteromonas mediterranea (strain DSM 17117 / CIP 110805 / LMG 28347 / Deep ecotype).